The primary structure comprises 955 residues: MSRALDTHSDFIPRHIGPSEADQAKMLATIGCSSLDALLEEVVPPRIRNQAPLALPGARSEPDVLAELKQMAARNKVFRNYIGQGYYGTHTPNVVLRNVLENPAWYTAYTPYQPEISQGRLEALLNYQTMVADLTGLDISNASLLDEGTAAAEAMTLARRSAKSKSAVFFVSQHCHPQTIEVVRTRAQGLDIDVLVGDESQGLPECFGVLLQYPHSLGGVVNYRELAEAAHAQGAVVACATDLLALALLTPPGEWGADIAVGTAQRFGVPFGFGGPHAGFMACRDAFKRNMPGRLVGVSKDAQGNPALRLALQTREQHIRREKATSNICTAQVLLAVMAGLYAVWHGPAGLRRIATRVHTFAGVLRQHVQALGLTVENDSYFDTLLINTGPATPAVLRAAECAHINLRRVDAGRVAVSIDETVTVEDLQALINVFAAGLGKDDITLDAATLAPEAGLPAGTVRTSPILSHPVFSSVQSETDMLRYLRKLADKDLALDRSMIPLGSCTMKLNATAEMIPITWPEFALIHPFAPADQTAGYRELIERLSAALCEITGYDNISLQPNSGAQGEYAGLLAIRGYHQARGEHQRNICLIPSSAHGTNPASAQLAGMDVVVVASDDHGNVDLDDLRAKIEQVGDRLAALMITYPSTHGVFEETVTEICERVHAAGGQVYLDGANMNAMVGVAKPGKFGSDVSHLNLHKTFCIPHGGGGPGVGPVAVRAHLAPYLPGVLNEQGKLDAEAKVGPVSAAPYGSAGILAIPFVYISLMGAEGLRRATEVAILNANYVATRLREYYPVLYAGRHGRVAHECILDIRPLKESIGISAEDIAKRLMDYGFHAPTMSFPVAGTLMVEPTESEGLAELERFIDAMIAIRAEVAQVERGERDREDNVLKNAPHTAQMLLAEEWHHAYPRQQAAYPLASLRDGKYWPPVARVDNAYGDRNLVCSCLPIEAYI.

The residue at position 702 (Lys-702) is an N6-(pyridoxal phosphate)lysine.

It belongs to the GcvP family. The glycine cleavage system is composed of four proteins: P, T, L and H. The cofactor is pyridoxal 5'-phosphate.

It catalyses the reaction N(6)-[(R)-lipoyl]-L-lysyl-[glycine-cleavage complex H protein] + glycine + H(+) = N(6)-[(R)-S(8)-aminomethyldihydrolipoyl]-L-lysyl-[glycine-cleavage complex H protein] + CO2. Functionally, the glycine cleavage system catalyzes the degradation of glycine. The P protein binds the alpha-amino group of glycine through its pyridoxal phosphate cofactor; CO(2) is released and the remaining methylamine moiety is then transferred to the lipoamide cofactor of the H protein. This is Glycine dehydrogenase (decarboxylating) from Bordetella avium (strain 197N).